The chain runs to 107 residues: Quaternary ammonium compound-resistance protein QacC (107 aa).

3 helical membrane-spanning segments follow: residues 26–46 (FSKF…FYFL), 57–77 (ITYA…SIII), and 84–104 (LITI…NIFG).

This sequence belongs to the drug/metabolite transporter (DMT) superfamily. Small multidrug resistance (SMR) (TC 2.A.7.1) family.

The protein localises to the cell membrane. Functionally, multidrug exporter. Is implicated for the resistance to bacteriocidal quaternary ammonium compounds. This chain is Quaternary ammonium compound-resistance protein QacC, found in Staphylococcus sp. (strain ST827).